We begin with the raw amino-acid sequence, 215 residues long: Phosphatidylserine decarboxylase proenzyme (215 aa).

Serine 185 acts as the Schiff-base intermediate with substrate; via pyruvic acid in catalysis. A Pyruvic acid (Ser); by autocatalysis modification is found at serine 185.

Belongs to the phosphatidylserine decarboxylase family. PSD-A subfamily. As to quaternary structure, heterodimer of a large membrane-associated beta subunit and a small pyruvoyl-containing alpha subunit. It depends on pyruvate as a cofactor. Is synthesized initially as an inactive proenzyme. Formation of the active enzyme involves a self-maturation process in which the active site pyruvoyl group is generated from an internal serine residue via an autocatalytic post-translational modification. Two non-identical subunits are generated from the proenzyme in this reaction, and the pyruvate is formed at the N-terminus of the alpha chain, which is derived from the carboxyl end of the proenzyme. The post-translation cleavage follows an unusual pathway, termed non-hydrolytic serinolysis, in which the side chain hydroxyl group of the serine supplies its oxygen atom to form the C-terminus of the beta chain, while the remainder of the serine residue undergoes an oxidative deamination to produce ammonia and the pyruvoyl prosthetic group on the alpha chain.

Its subcellular location is the cell membrane. It carries out the reaction a 1,2-diacyl-sn-glycero-3-phospho-L-serine + H(+) = a 1,2-diacyl-sn-glycero-3-phosphoethanolamine + CO2. The protein operates within phospholipid metabolism; phosphatidylethanolamine biosynthesis; phosphatidylethanolamine from CDP-diacylglycerol: step 2/2. Its function is as follows. Catalyzes the formation of phosphatidylethanolamine (PtdEtn) from phosphatidylserine (PtdSer). This Streptomyces griseus subsp. griseus (strain JCM 4626 / CBS 651.72 / NBRC 13350 / KCC S-0626 / ISP 5235) protein is Phosphatidylserine decarboxylase proenzyme.